Here is an 883-residue protein sequence, read N- to C-terminus: uncharacterized protein (883 aa).

The tract at residues 258–373 is disordered; it reads INNQSDNQSN…NQFNKPDNEP (116 aa). Low complexity-rich tracts occupy residues 259–268, 277–317, and 324–333; these read NNQSDNQSNS, EPNG…SNSE, and NEPNTEPNTE. Residues 334-347 are compositionally biased toward polar residues; the sequence is SNGQSNSELNNQSD. Low complexity predominate over residues 348–368; it reads NHPNNEPNSEPNNEPNNQFNK.

This sequence belongs to the mimivirus L137 family.

This is an uncharacterized protein from Acanthamoeba polyphaga mimivirus (APMV).